A 154-amino-acid chain; its full sequence is uncharacterized protein (154 aa).

The N-terminal stretch at 1 to 21 (MSISSGSFAQPAAVVSSPGVT) is a signal peptide.

This sequence belongs to the ivy family.

Its subcellular location is the periplasm. This is an uncharacterized protein from Yersinia pestis.